The following is a 76-amino-acid chain: Putative Fe(2+) transport protein A (76 aa).

This sequence belongs to the FeoA family.

Its function is as follows. Might be involved in Fe(2+) ion uptake. The sequence is that of Putative Fe(2+) transport protein A from Helicobacter pylori (strain ATCC 700392 / 26695) (Campylobacter pylori).